Consider the following 252-residue polypeptide: tRNA pseudouridine synthase A (252 aa).

The Nucleophile role is filled by D52. Position 111 (Y111) interacts with substrate.

This sequence belongs to the tRNA pseudouridine synthase TruA family. Homodimer.

It carries out the reaction uridine(38/39/40) in tRNA = pseudouridine(38/39/40) in tRNA. Formation of pseudouridine at positions 38, 39 and 40 in the anticodon stem and loop of transfer RNAs. In Methylorubrum populi (strain ATCC BAA-705 / NCIMB 13946 / BJ001) (Methylobacterium populi), this protein is tRNA pseudouridine synthase A.